We begin with the raw amino-acid sequence, 123 residues long: Large ribosomal subunit protein bL17 (123 aa).

Belongs to the bacterial ribosomal protein bL17 family. As to quaternary structure, part of the 50S ribosomal subunit. Contacts protein L32.

The polypeptide is Large ribosomal subunit protein bL17 (Borrelia garinii subsp. bavariensis (strain ATCC BAA-2496 / DSM 23469 / PBi) (Borreliella bavariensis)).